We begin with the raw amino-acid sequence, 332 residues long: Fructose-1,6-bisphosphatase class 1 (332 aa).

E89, D110, L112, and D113 together coordinate Mg(2+). Substrate contacts are provided by residues 113-116 (DGSS), N206, Y239, 257-259 (YLY), and K269. Mg(2+) is bound at residue E275.

It belongs to the FBPase class 1 family. As to quaternary structure, homotetramer. Mg(2+) serves as cofactor.

It localises to the cytoplasm. The enzyme catalyses beta-D-fructose 1,6-bisphosphate + H2O = beta-D-fructose 6-phosphate + phosphate. It participates in carbohydrate biosynthesis; gluconeogenesis. This is Fructose-1,6-bisphosphatase class 1 from Salmonella arizonae (strain ATCC BAA-731 / CDC346-86 / RSK2980).